The primary structure comprises 567 residues: Lipase maturation factor 1 (567 aa).

A disordered region spans residues 1-39; sequence MRPDSPTMAAPAESLRRRKTGYSDPEPESPPAPGRGPAG. Residues 1–49 lie on the Cytoplasmic side of the membrane; sequence MRPDSPTMAAPAESLRRRKTGYSDPEPESPPAPGRGPAGSPAHLHTGTF. Residues 50-72 traverse the membrane as a helical segment; the sequence is WLTRIVLLKALAFVYFVAFLVAF. Over 73–127 the chain is Lumenal; that stretch reads HQNKQLIGDRGLLPCRVFLKNFQQYFQDRTSWEVFSYMPTILWLMDWSDMNSNLD. The chain crosses the membrane as a helical span at residues 128–151; it reads LLALLGLGISSFVLITGCANMLLM. Residues 152-207 are Cytoplasmic-facing; it reads AALWGLYMSLVNVGHVWYSFGWESQLLETGFLGIFLCPLWTLSRLPQHTPTSRIVL. The chain crosses the membrane as a helical span at residues 208-221; sequence WGFRWLIFRIMLGA. Residues 222–292 are Lumenal-facing; sequence GLIKIRGDRC…LGRRACIIHG (71 aa). A helical transmembrane segment spans residues 293-321; that stretch reads VLQILFQAVLIVSGNLSFLNWLTMVPSLA. Residues 322–367 are Cytoplasmic-facing; it reads CFDDATLGFLFPSGPGSLKDRVLQMQRDIRGARPEPRFGSVVRRAA. A helical transmembrane segment spans residues 368 to 388; sequence NVSLGVLLAWLSVPVVLNLLS. Topologically, residues 389-567 are lumenal; the sequence is SRQVMNTHFN…DRGWPLPGPL (179 aa).

It belongs to the lipase maturation factor family. As to quaternary structure, interacts with LPL and SEL1L.

Its subcellular location is the endoplasmic reticulum membrane. Its function is as follows. Involved in the maturation of specific proteins in the endoplasmic reticulum. Required for maturation and transport of active lipoprotein lipase (LPL) through the secretory pathway. Each LMF1 molecule chaperones 50 or more molecules of LPL. The polypeptide is Lipase maturation factor 1 (LMF1) (Homo sapiens (Human)).